A 500-amino-acid chain; its full sequence is 4-aminobutyrate aminotransferase, mitochondrial (500 aa).

Residues 1 to 27 (MAFLLTTRRLVCSSQKNLHLFTPGSRY) constitute a mitochondrion transit peptide. C163 lines the [2Fe-2S] cluster pocket. A pyridoxal 5'-phosphate-binding site is contributed by 164–165 (GS). A [2Fe-2S] cluster-binding site is contributed by C166. R220 is a substrate binding site. The residue at position 231 (K231) is an N6-succinyllysine. K252 is subject to N6-acetyllysine; alternate. K252 carries the post-translational modification N6-succinyllysine; alternate. An N6-acetyllysine mark is found at K279 and K318. At K357 the chain carries N6-(pyridoxal phosphate)lysine. T381 is a binding site for pyridoxal 5'-phosphate. K413 is subject to N6-acetyllysine; alternate. N6-succinyllysine; alternate is present on K413. N6-acetyllysine occurs at positions 452 and 470.

Belongs to the class-III pyridoxal-phosphate-dependent aminotransferase family. In terms of assembly, homodimer; disulfide-linked. The cofactor is pyridoxal 5'-phosphate. Requires [2Fe-2S] cluster as cofactor.

It is found in the mitochondrion matrix. The catalysed reaction is 4-aminobutanoate + 2-oxoglutarate = succinate semialdehyde + L-glutamate. It catalyses the reaction (S)-3-amino-2-methylpropanoate + 2-oxoglutarate = 2-methyl-3-oxopropanoate + L-glutamate. Functionally, catalyzes the conversion of gamma-aminobutyrate and L-beta-aminoisobutyrate to succinate semialdehyde and methylmalonate semialdehyde, respectively. Can also convert delta-aminovalerate and beta-alanine. The protein is 4-aminobutyrate aminotransferase, mitochondrial of Rattus norvegicus (Rat).